The primary structure comprises 97 residues: MVLVKFKREKLTVMLEVQPGLSVYDAVKLLKSALNLPPDSILRIGSFEQNDWVAMENDALSKTIITNNTEYAFAEGEEPLLVEKPKDYDDMSEEISP.

This is an uncharacterized protein from Schizosaccharomyces pombe (strain 972 / ATCC 24843) (Fission yeast).